Here is a 331-residue protein sequence, read N- to C-terminus: Ketol-acid reductoisomerase (NADP(+)) (331 aa).

In terms of domain architecture, KARI N-terminal Rossmann spans Val2–Thr182. NADP(+) contacts are provided by residues Phe25–Gln28, Ser51, and Ser53. His108 is a catalytic residue. Position 134 (Gly134) interacts with NADP(+). Residues Thr183–Ile328 form the KARI C-terminal knotted domain. Mg(2+) is bound by residues Asp191, Glu195, Glu227, and Glu231. Residue Ser252 coordinates substrate.

This sequence belongs to the ketol-acid reductoisomerase family. Mg(2+) is required as a cofactor.

The catalysed reaction is (2R)-2,3-dihydroxy-3-methylbutanoate + NADP(+) = (2S)-2-acetolactate + NADPH + H(+). It catalyses the reaction (2R,3R)-2,3-dihydroxy-3-methylpentanoate + NADP(+) = (S)-2-ethyl-2-hydroxy-3-oxobutanoate + NADPH + H(+). It participates in amino-acid biosynthesis; L-isoleucine biosynthesis; L-isoleucine from 2-oxobutanoate: step 2/4. It functions in the pathway amino-acid biosynthesis; L-valine biosynthesis; L-valine from pyruvate: step 2/4. In terms of biological role, involved in the biosynthesis of branched-chain amino acids (BCAA). Catalyzes an alkyl-migration followed by a ketol-acid reduction of (S)-2-acetolactate (S2AL) to yield (R)-2,3-dihydroxy-isovalerate. In the isomerase reaction, S2AL is rearranged via a Mg-dependent methyl migration to produce 3-hydroxy-3-methyl-2-ketobutyrate (HMKB). In the reductase reaction, this 2-ketoacid undergoes a metal-dependent reduction by NADPH to yield (R)-2,3-dihydroxy-isovalerate. The protein is Ketol-acid reductoisomerase (NADP(+)) of Parafrankia sp. (strain EAN1pec).